The primary structure comprises 359 residues: Aromatic amino acid aminotransferase (359 aa).

N6-(pyridoxal phosphate)lysine is present on K223.

This sequence belongs to the class-II pyridoxal-phosphate-dependent aminotransferase family. Homodimer. Pyridoxal 5'-phosphate serves as cofactor.

The enzyme catalyses an aromatic L-alpha-amino acid + 2-oxoglutarate = an aromatic oxo-acid + L-glutamate. Its function is as follows. Aminotransferase that catalyzes the conversion of aromatic amino acids and 2-oxoglutarate into corresponding aromatic oxo acids and L-glutamate. The chain is Aromatic amino acid aminotransferase from Streptomyces avermitilis (strain ATCC 31267 / DSM 46492 / JCM 5070 / NBRC 14893 / NCIMB 12804 / NRRL 8165 / MA-4680).